A 1450-amino-acid chain; its full sequence is DNA-directed RNA polymerase RPB1 homolog (1450 aa).

Belongs to the RNA polymerase beta' chain family. As to quaternary structure, part of the viral DNA-directed RNA polymerase that consists of 8 polII-like subunits (RPB1, RPB2, RPB3, RPB5, RPB6, RPB7, RPB9, RPB10), a capping enzyme and a termination factor.

It is found in the virion. The catalysed reaction is RNA(n) + a ribonucleoside 5'-triphosphate = RNA(n+1) + diphosphate. Catalytic component of the DNA-directed RNA polymerase (RNAP) that catalyzes the transcription in the cytoplasm of viral DNA into RNA using the four ribonucleoside triphosphates as substrates. Forms the polymerase active center together with RPB2. Part of the core element with the central large cleft, the clamp element that moves to open and close the cleft and the jaws that are thought to grab the incoming DNA template. The sequence is that of DNA-directed RNA polymerase RPB1 homolog from African swine fever virus (isolate Pig/Kenya/KEN-50/1950) (ASFV).